Here is a 226-residue protein sequence, read N- to C-terminus: ATP-dependent dethiobiotin synthetase BioD (226 aa).

12–17 (GVGKTV) is an ATP binding site. Mg(2+) is bound at residue Thr-16. Lys-37 is an active-site residue. Thr-41 is a binding site for substrate. ATP contacts are provided by residues Asp-49, 108–111 (EGAG), and 197–199 (PAG). Mg(2+) is bound by residues Asp-49 and Glu-108.

This sequence belongs to the dethiobiotin synthetase family. Homodimer. The cofactor is Mg(2+).

Its subcellular location is the cytoplasm. It catalyses the reaction (7R,8S)-7,8-diammoniononanoate + CO2 + ATP = (4R,5S)-dethiobiotin + ADP + phosphate + 3 H(+). It participates in cofactor biosynthesis; biotin biosynthesis; biotin from 7,8-diaminononanoate: step 1/2. Its function is as follows. Catalyzes a mechanistically unusual reaction, the ATP-dependent insertion of CO2 between the N7 and N8 nitrogen atoms of 7,8-diaminopelargonic acid (DAPA, also called 7,8-diammoniononanoate) to form a ureido ring. The sequence is that of ATP-dependent dethiobiotin synthetase BioD from Mycobacterium avium (strain 104).